Here is a 78-residue protein sequence, read N- to C-terminus: Omega-conotoxin-like SO-4 (78 aa).

The first 22 residues, 1–22 (MKLTCMVIVAVLLLTACQLITA), serve as a signal peptide directing secretion. Residues 23–42 (DDSRGTQKHRSLRSTTKVSK) constitute a propeptide that is removed on maturation. Intrachain disulfides connect Cys46-Cys62, Cys53-Cys65, and Cys61-Cys72.

The protein belongs to the conotoxin O1 superfamily. In terms of tissue distribution, expressed by the venom duct.

It localises to the secreted. Its function is as follows. Omega-conotoxins act at presynaptic membranes, they bind and block voltage-gated calcium channels (Cav). The polypeptide is Omega-conotoxin-like SO-4 (SO4) (Conus striatus (Striated cone)).